Here is a 220-residue protein sequence, read N- to C-terminus: Large ribosomal subunit protein uL3 (220 aa).

Residues 61–81 (KGSKSNKYANKPAEGHAKKAD) form a disordered region.

The protein belongs to the universal ribosomal protein uL3 family. As to quaternary structure, part of the 50S ribosomal subunit. Forms a cluster with proteins L14 and L19.

Its function is as follows. One of the primary rRNA binding proteins, it binds directly near the 3'-end of the 23S rRNA, where it nucleates assembly of the 50S subunit. This chain is Large ribosomal subunit protein uL3, found in Staphylococcus epidermidis (strain ATCC 12228 / FDA PCI 1200).